The following is a 1383-amino-acid chain: MTSYSFTEKKRIRKDFGKQRSILEVPFLLAIQVDSYREFLQEDVEPNKRKDLGLHAALKSVFPISSYSGNAALEYVGYKLGQPVFDERECRQRGMSYGAPLRVTVRLVIYDRESSTKAIKYVKEQEVYLGEIPLMTGNGTFIVNGTERVIVSQLHRSPGVFFDHDRGKTHSSGKLLYSARIIPYRGSWLDFEFDPKDALFTRIDRRRKLPVSILLRALGYSNEEMLAEFFEINTFHINPDEGVQLELVPERLRGETLNFDLADGDKVIVEAGKRITARHVKQLEAAGVAALAVPDDYLVGRILSHDVVDGSTGELLANANDEINEDQLAAFRKAGVDAVGTLWVNDLDRGPYLSNTLRIDPTKTQLEALVEIYRMMRPGEPPTKEAAQNLFHNLFFTFERYDLSTVGRMKFNRRVGRKDVLGESVLYDKKYFAERNDEESKRLVAEHADTSDILEVIKVLTEIRNGRGVVDDIDHLGNRRVRSVGEMAENVFRVGLVRVERAVKERLSMAESEGLTPQELINAKPVAAAIKEFFGSSQLSQFMDQNNPLSEVTHKRRVSALGPGGLTRERAGFEVRDVHPTHYGRVCTIETPEGPNIGLINSLAVFARTNQYGFLETPYRKVLDGKVSDDVEYLSAIEENEYVIAQANALTDAKNMLTEQFVPCRFQGESLLKPPSEVHFMDVSPMQTVSVAAALVPFLEHDDANRALMGANMQRQAVPTLRSQKPLVGTGIERAVARDSGVTVNALRGGVIEQIDAARIVVKVNEAEIGGGTDAGVDIYNLIKYTRSNQNTCINQRPLVNVGDVIARGDVLADGPSTDIGELALGQNMLIAFMPWNGYNFEDSILLSERVVEEDRYTTIHIEELTCVARDTKLGPEEISADIPNVSEQALNRLDESGVVYIGAEVRAGDIMVGKVTPKGESQLTPEEKLLRAIFGEKASDVKDSSLRVPPGMDGTVIDVQVFTRDGIEKDKRARQIEESEIKRVKKDFDDQFRILEAAIYARLRSQIVGKVANGGANLKKGDTVTDAYLDGLKKSDWFQLRMKDEDAADAIERAQKQIQAHEKEFEARFADKRGKITQGDDLAPGVLKMVKVFLAVKRRIQPGDKMAGRHGNKGVVSNVVPVEDMPYMATGESVDIVLNPLGVPSRMNIGQILEVHLGWAAKGLGRKIQRMLEAQAAVSELRKFLNDIYNHDNAINAQRVDLSQFSDEELLNLGKNLIDGVPMATPVFDGASEAEIKRMLELADLPQSGQTQLYDGRTGEAFDRKTTVGYMHYLKLNHLVDDKMHARSTGPYSLVTQQPLGGKAQFGGQRFGEMEVWALEAYGAAYTLQEMLTVKSDDVQGRNQMYKNIVDGEHEMVAGMPESFNVLVKEIRSLAINMELEE.

The protein belongs to the RNA polymerase beta chain family. In terms of assembly, the RNAP catalytic core consists of 2 alpha, 1 beta, 1 beta' and 1 omega subunit. When a sigma factor is associated with the core the holoenzyme is formed, which can initiate transcription.

It catalyses the reaction RNA(n) + a ribonucleoside 5'-triphosphate = RNA(n+1) + diphosphate. In terms of biological role, DNA-dependent RNA polymerase catalyzes the transcription of DNA into RNA using the four ribonucleoside triphosphates as substrates. The polypeptide is DNA-directed RNA polymerase subunit beta (Xanthomonas axonopodis pv. citri (strain 306)).